Reading from the N-terminus, the 1199-residue chain is DNA-directed RNA polymerase subunit beta (1199 aa).

Positions 1175 to 1199 (EEKKAHEAAAQATDGKSANSTDDKK) are disordered. The segment covering 1188 to 1199 (DGKSANSTDDKK) has biased composition (polar residues).

Belongs to the RNA polymerase beta chain family. The RNAP catalytic core consists of 2 alpha, 1 beta, 1 beta' and 1 omega subunit. When a sigma factor is associated with the core the holoenzyme is formed, which can initiate transcription.

The enzyme catalyses RNA(n) + a ribonucleoside 5'-triphosphate = RNA(n+1) + diphosphate. In terms of biological role, DNA-dependent RNA polymerase catalyzes the transcription of DNA into RNA using the four ribonucleoside triphosphates as substrates. In Lacticaseibacillus paracasei (strain ATCC 334 / BCRC 17002 / CCUG 31169 / CIP 107868 / KCTC 3260 / NRRL B-441) (Lactobacillus paracasei), this protein is DNA-directed RNA polymerase subunit beta.